The primary structure comprises 325 residues: MVKRQISMVLDLNKCIGCQTCTSACKLQWTNRNGREYMYWNNVETHPGPGYPRNYEHSGGGFDEEGALKIGITPSAEDYGIPWEYNYEEALMTGTDPWLRPNVKPTWGANWNEDEGRGEYPNSYYFYLPRICNHCANPGCLAACARNAIYKRQEDGIVLVDQERCRGYRYCITACPYKKVYFNEQISKAEKCIFCYPRIEKGLPTACAKQCVGRIRFIGYLDDEAGPVHLLVERYKVAIPLHPEWGTKPSVFYVPPLAPPRIGDDGEPTEETRVPLAYLKELFGEAVVPALETLKTERAKKQSGAESELMDTLIGYRHPEMFKLS.

4Fe-4S ferredoxin-type domains follow at residues 6–35 (ISMV…RNGR), 123–154 (SYYF…KRQE), and 156–185 (GIVL…FNEQ). [4Fe-4S] cluster-binding residues include cysteine 15, cysteine 18, cysteine 21, cysteine 25, cysteine 132, cysteine 135, and cysteine 140. [3Fe-4S] cluster is bound by residues cysteine 144, cysteine 165, and cysteine 171. Cysteine 175, cysteine 192, cysteine 195, cysteine 207, and cysteine 211 together coordinate [4Fe-4S] cluster.

As to quaternary structure, heterotrimer of alpha, beta and gamma subunits. The cofactor is [3Fe-4S] cluster. [4Fe-4S] cluster serves as cofactor.

It localises to the periplasm. Electron transfer subunit of the dehydrogenase during anaerobic growth on dimethyl sulfide. In Rhodovulum sulfidophilum (Rhodobacter sulfidophilus), this protein is Dimethylsulfide dehydrogenase subunit beta (ddhB).